Reading from the N-terminus, the 723-residue chain is Lim and transglutaminase domain protein ltd-1 (723 aa).

The LIM zinc-binding domain maps to 5 to 72; it reads QHCNRCGKQV…SNHVPIAGPH (68 aa).

This sequence belongs to the transglutaminase-like superfamily. In terms of tissue distribution, expressed in the Y and U rectal epithelial cells, in marginal cells of the terminal bulb and isthmus of the pharynx (at protein level).

It localises to the cytoplasm. The protein localises to the cytoskeleton. Its function is as follows. Cytoskeleton-associated protein. May play a role in hypodermal cell development. This Caenorhabditis elegans protein is Lim and transglutaminase domain protein ltd-1.